The sequence spans 425 residues: Histidine--tRNA ligase (425 aa).

Belongs to the class-II aminoacyl-tRNA synthetase family. Homodimer.

Its subcellular location is the cytoplasm. The enzyme catalyses tRNA(His) + L-histidine + ATP = L-histidyl-tRNA(His) + AMP + diphosphate + H(+). The chain is Histidine--tRNA ligase from Histophilus somni (strain 129Pt) (Haemophilus somnus).